The primary structure comprises 258 residues: Regulatory protein RecX (258 aa).

This sequence belongs to the RecX family.

The protein resides in the cytoplasm. Modulates RecA activity. This Streptococcus thermophilus (strain CNRZ 1066) protein is Regulatory protein RecX.